We begin with the raw amino-acid sequence, 102 residues long: Small ribosomal subunit protein uS10 (102 aa).

This sequence belongs to the universal ribosomal protein uS10 family. In terms of assembly, part of the 30S ribosomal subunit.

In terms of biological role, involved in the binding of tRNA to the ribosomes. The sequence is that of Small ribosomal subunit protein uS10 from Methanobrevibacter smithii (strain ATCC 35061 / DSM 861 / OCM 144 / PS).